A 637-amino-acid chain; its full sequence is BUD13 homolog (637 aa).

The segment at Ser18–Asp53 is disordered. A Glycyl lysine isopeptide (Lys-Gly) (interchain with G-Cter in SUMO2) cross-link involves residue Lys65. Positions Leu104–Leu470 are disordered. Residues His108–Gln119 show a composition bias toward basic and acidic residues. Thr131 is subject to Phosphothreonine. Ser135 carries the post-translational modification Phosphoserine. Position 144 is a phosphothreonine (Thr144). Ser148 carries the phosphoserine modification. Thr157 carries the post-translational modification Phosphothreonine. Ser161 is modified (phosphoserine). Residue Thr170 is modified to Phosphothreonine. The residue at position 174 (Ser174) is a Phosphoserine. Thr183 is modified (phosphothreonine). Ser187 carries the phosphoserine modification. A phosphothreonine mark is found at Thr196 and Thr209. Residue Ser213 is modified to Phosphoserine. Thr222 carries the phosphothreonine modification. Residues Ser226, Ser238, Ser259, Ser264, Ser272, Ser284, Ser285, and Ser297 each carry the phosphoserine modification. Positions Leu260 to Ala275 are enriched in polar residues. Over residues His295–Pro315 the composition is skewed to basic and acidic residues. The segment covering Ala318–Ser335 has biased composition (polar residues). 2 positions are modified to phosphoserine: Ser341 and Ser344. Basic and acidic residues predominate over residues Ala353–Asp362. Ser371, Ser373, Ser376, Ser410, and Ser426 each carry phosphoserine. Basic residues predominate over residues Arg430–Ala439. The segment covering Val453 to Gln465 has biased composition (basic and acidic residues). Residues Asn490–Lys538 are a coiled coil. Tyr512 is subject to Phosphotyrosine. The interval Leu553–Asn595 is disordered. Ser585 is subject to Phosphoserine.

It belongs to the CWC26 family. Part of the activated spliceosome B/catalytic step 1 spliceosome, one of the forms of the spliceosome which has a well-formed active site but still cannot catalyze the branching reaction and is composed of at least 52 proteins, the U2, U5 and U6 snRNAs and the pre-mRNA. Component of the minor spliceosome, which splices U12-type introns.

The protein resides in the nucleus. Its function is as follows. Involved in pre-mRNA splicing as component of the activated spliceosome. As a component of the minor spliceosome, involved in the splicing of U12-type introns in pre-mRNAs. The chain is BUD13 homolog (Bud13) from Mus musculus (Mouse).